We begin with the raw amino-acid sequence, 466 residues long: Ras GTPase-activating protein-binding protein 1 (466 aa).

Residues 11 to 133 (VGREFVRQYY…FYVHNDIFRY (123 aa)) enclose the NTF2 domain. Residues K36, K50, K59, K64, K76, and K123 each participate in a glycyl lysine isopeptide (Lys-Gly) (interchain with G-Cter in ubiquitin) cross-link. The acidic disordered region stretch occupies residues 142-225 (VTEPQEESEE…EPVLEETAPE (84 aa)). A Phosphothreonine modification is found at T143. Disordered regions lie at residues 144-172 (EPQEESEEEVEEPEERQQTPEVVPDDSGT) and 184-243 (EEHL…QTVQ). Composition is skewed to acidic residues over residues 145-157 (PQEESEEEVEEPE) and 185-206 (EHLEEPVAEPEPDPEPEPEQEP). At S149 the chain carries Phosphoserine. A phosphoserine mark is found at S231, S232, S250, and S253. The disordered stretch occupies residues 255 to 329 (TSKNLPPSGA…REAGEQGDIE (75 aa)). Composition is skewed to basic and acidic residues over residues 297–307 (PQRDQRVREQR) and 318–329 (PIREAGEQGDIE). Residues 340 to 415 (HQLFIGNLPH…VRLNVEEKKT (76 aa)) enclose the RRM domain. Residues K353 and K357 each participate in a glycyl lysine isopeptide (Lys-Gly) (interchain with G-Cter in ubiquitin) cross-link. Residue S373 is modified to Phosphoserine. Residue K376 forms a Glycyl lysine isopeptide (Lys-Gly) (interchain with G-Cter in ubiquitin) linkage. N6-acetyllysine; alternate is present on K376. K376 participates in a covalent cross-link: Glycyl lysine isopeptide (Lys-Gly) (interchain with G-Cter in SUMO2); alternate. A Glycyl lysine isopeptide (Lys-Gly) (interchain with G-Cter in ubiquitin); alternate cross-link involves residue K393. The segment at 410–466 (VEEKKTRAAREGDRRDNRLRGPGGPRGGLGGGMRGPPRGGMVQKPGFGVGRGLAPRQ) is RG-rich region. The span at 413 to 428 (KKTRAAREGDRRDNRL) shows a compositional bias: basic and acidic residues. Residues 413 to 466 (KKTRAAREGDRRDNRLRGPGGPRGGLGGGMRGPPRGGMVQKPGFGVGRGLAPRQ) form a disordered region. R429 carries the asymmetric dimethylarginine modification. Residues 430–447 (GPGGPRGGLGGGMRGPPR) are compositionally biased toward gly residues. Position 435 is an asymmetric dimethylarginine; alternate (R435). R435 carries the dimethylated arginine; alternate modification. Omega-N-methylarginine; alternate is present on R435. R447 bears the Omega-N-methylarginine mark. R460 is modified (dimethylated arginine; alternate). Position 460 is an omega-N-methylarginine; alternate (R460). R465 is modified (omega-N-methylarginine).

In terms of assembly, homodimer and oligomer. Component of a TAU mRNP complex, at least composed of IGF2BP1, ELAVL4 and G3BP1. Binds to the SH3 domain of Ras GTPase-activating protein (RASA1) in proliferating cells. No interaction in quiescent cells. Interacts (via NTF2 domain) with USP10; inhibiting stress granule formation by lowering G3BP1 valence. Interacts (via NTF2 domain) with CAPRIN1; promoting stress granule formation by lowering the saturation-concentration of G3BP1. Interacts (via NTF2 domain) with UBAP2L; promoting stress granule formation. Associates (via RG-rich region) with 40S ribosome subunits. Interacts with RPTOR and SPAG5; this complex is increased by oxidative stress. Interacts with ATXN2L. Interacts with STYXL1. Interacts with CGAS (via N-terminus); this interaction promotes the DNA-binding and activation of CGAS. Interacts (via C-terminus) with RIGI. Interacts with PABPC1. Interacts with QKI (isoforms QKI6 and QKI7); directing N(7)-methylguanine-containing mRNAs to stress granules. (Microbial infection) Interacts with Semliki forest virus non-structural protein 3 (via C-terminus); this interaction inhibits the formation of stress granules on viral mRNAs and the nsp3-G3BP1 complexes bind viral RNAs and probably orchestrate the assembly of viral replication complexes. As to quaternary structure, (Microbial infection) Interacts with Chikungunya virus non-structural protein 3 (via C-terminus); this interaction inhibits the formation of stress granules on viral mRNAs and the nsp3-G3BP1 complexes bind viral RNAs and probably orchestrate the assembly of viral replication complexes. In terms of assembly, (Microbial infection) Interacts with Sindbis virus non-structural protein 3 (via C-terminus); this interaction inhibits the formation of stress granules on viral mRNAs and the nsp3-G3BP1 complexes bind viral RNAs and probably orchestrate the assembly of viral replication complexes. (Microbial infection) Interacts with Zika virus capsid protein C; this interaction is probably linked to the inhibition of stress granules formation by the virus. As to quaternary structure, (Microbial infection) Interacts with reovirus type 2 protein sigma-NS; this interaction induces the relocalization of G3BP1 to the outer periphery of sigma-NS/mu-Ns viral factories and is probably involved in the suppression of the integrated stress response by the virus. In terms of assembly, (Microbial infection) Interacts with SARS-CoV-2 N protein; the interaction is enhanced by host HDAC6 which deacetylates the viral N protein and promotes N protein association with G3BP1, disrupting stress granule formation and facilitating viral replication. Interacts with HDAC6; the interaction increases during SARS-CoV-2 infection. Mg(2+) serves as cofactor. In terms of processing, phosphorylation of the acidic disordered region regulates stress granule assembly. RASA1-dependent phosphorylation of Ser-149 induces a conformational change that prevents self-association. Dephosphorylation after HRAS activation is required for stress granule assembly. Ser-149 phosphorylation induces partial nuclear localization. Ubiquitinated by TRIM21 via 'Lys-63'-linked polyubiquitination in the NTF2 domain in response to heat shock, leading to stress granule disassembly: ubiquitination promotes interaction with the FAF2 adapter, followed by interaction with VCP, which extracts G3BP1 from stress granules, leading to stress granule disassembly. In case of prolonged stress, ubiquitination by TRIM21 leads to autophagy-dependent degradation of G3BP1 via recruitment of ubiquitinated G3BP1 by SQSTM1 and/or CALCOCO2 to autophagosomes. Post-translationally, (Microbial infection) Cleaved by human enterovirus 71; this cleavage induces the disassembly of cytoplasmic stress granules. Cleaved by Foot-and-mouth disease virus; this cleavage suppresses the formation of cytoplasmic stress granules. In terms of processing, arg-435 is dimethylated, probably to asymmetric dimethylarginine. (Microbial infection) Cleaved by Encephalomyocarditis virus protease 3C; this cleavage suppresses the formation of cytoplasmic stress granules. In terms of tissue distribution, ubiquitous.

Its subcellular location is the cytoplasm. It localises to the cytosol. It is found in the perikaryon. The protein resides in the stress granule. The protein localises to the nucleus. The catalysed reaction is ATP + H2O = ADP + phosphate + H(+). With respect to regulation, under physiological conditions, G3BP1 adopts a compact state that is stabilized by intramolecular interactions between the RG-rich and the acidic regions that inhibit phase separation. Upon stress, polysomes disassemble and mRNAs are released in an unfolded protein-free state. Binding of unfolded mRNA to G3BP1 outcompetes the intramolecular interactions and RNA-bound G3BP1 adopts an expanded conformation in which the RG-rich region becomes exposed to engage in protein-protein and protein-RNA interactions, allowing physical cross-linking of RNA molecules to form protein-RNA condensates, leading to liquid-liquid phase separation (LLPS). Protein involved in various processes, such as stress granule formation and innate immunity. Plays an essential role in stress granule formation. Stress granules are membraneless compartments that store mRNAs and proteins, such as stalled translation pre-initiation complexes, in response to stress. Promotes formation of stress granules phase-separated membraneless compartment by undergoing liquid-liquid phase separation (LLPS) upon unfolded RNA-binding: functions as a molecular switch that triggers RNA-dependent LLPS in response to a rise in intracellular free RNA concentrations. Also acts as an ATP- and magnesium-dependent helicase: unwinds DNA/DNA, RNA/DNA, and RNA/RNA substrates with comparable efficiency. Acts unidirectionally by moving in the 5' to 3' direction along the bound single-stranded DNA. Unwinds preferentially partial DNA and RNA duplexes having a 17 bp annealed portion and either a hanging 3' tail or hanging tails at both 5'- and 3'-ends. Plays an essential role in innate immunity by promoting CGAS and RIGI activity. Participates in the DNA-triggered cGAS/STING pathway by promoting the DNA binding and activation of CGAS. Triggers the condensation of cGAS, a process probably linked to the formation of membrane-less organelles. Also enhances RIGI-induced type I interferon production probably by helping RIGI at sensing pathogenic RNA. May also act as a phosphorylation-dependent sequence-specific endoribonuclease in vitro: Cleaves exclusively between cytosine and adenine and cleaves MYC mRNA preferentially at the 3'-UTR. This Homo sapiens (Human) protein is Ras GTPase-activating protein-binding protein 1.